Consider the following 113-residue polypeptide: Small ribosomal subunit protein bS6 (113 aa).

The protein belongs to the bacterial ribosomal protein bS6 family.

Binds together with bS18 to 16S ribosomal RNA. The protein is Small ribosomal subunit protein bS6 of Vesicomyosocius okutanii subsp. Calyptogena okutanii (strain HA).